A 231-amino-acid polypeptide reads, in one-letter code: Transmembrane protein 225 (231 aa).

Over 1–13 (MVHILVRKVEATN) the chain is Cytoplasmic. The chain crosses the membrane as a helical span at residues 14–34 (MFFSSWTLVFLAVGIIIEEWA). At 35–67 (ELKLGPQKPTITHSPWICCTPLWPSDGLEVIRN) the chain is on the extracellular side. Residues 68–88 (ILIVVLSLSFMHNLLLGFEFT) form a helical membrane-spanning segment. Topologically, residues 89 to 97 (YMIPQTKYT) are cytoplasmic. Residues 98 to 118 (LIMTACLAFLTGILLLGALLL) traverse the membrane as a helical segment. The Extracellular segment spans residues 119–135 (YHHMLRQGESVYYSSYK). The helical transmembrane segment at 136–156 (ISWIIFTAYLNVLFLFISGFL) threads the bilayer. Topologically, residues 157–231 (SLLQYKQPID…IQARRVTWAL (75 aa)) are cytoplasmic. Positions 225–229 (RRVTW) match the RVxF motif.

As to quaternary structure, interacts (via RVxF motif) with PPP1CC.

It localises to the cytoplasmic vesicle. Its subcellular location is the secretory vesicle. The protein resides in the acrosome membrane. In terms of biological role, probably inhibits protein phosphatase 1 (PP1) in sperm via binding to catalytic subunit PPP1CC. The protein is Transmembrane protein 225 (TMEM225) of Bos taurus (Bovine).